A 65-amino-acid polypeptide reads, in one-letter code: MAVPFRRTGKTAKRKRRTHYKLDNPALVVCKQTNNFTLSHRVTKNSGYYKGRLLLENNKIVKKVA.

Belongs to the bacterial ribosomal protein bL32 family.

This Phytoplasma australiense protein is Large ribosomal subunit protein bL32.